The chain runs to 990 residues: DNA polymerase (990 aa).

Residues 936-976 (PSDDAARKRARAGPSALRKQKAASNDEDSSDEDDEDCSQAI) form a disordered region. The span at 960-972 (NDEDSSDEDDEDC) shows a compositional bias: acidic residues.

Belongs to the DNA polymerase type-B family.

The enzyme catalyses DNA(n) + a 2'-deoxyribonucleoside 5'-triphosphate = DNA(n+1) + diphosphate. Replicates the viral genome, host DNA polymerases cannot substitute for the viral enzyme in this process. This is DNA polymerase (POL) from Choristoneura fumiferana (Spruce budworm moth).